We begin with the raw amino-acid sequence, 473 residues long: Hexaprenyl pyrophosphate synthase, mitochondrial (473 aa).

Residues K84, R87, and H186 each coordinate isopentenyl diphosphate. Residues D193 and D197 each coordinate Mg(2+). Position 202 (R202) interacts with an all-trans-polyprenyl diphosphate. R203 provides a ligand contact to isopentenyl diphosphate. 4 residues coordinate an all-trans-polyprenyl diphosphate: K323, T324, Q361, and K378.

Belongs to the FPP/GGPP synthase family. Requires Mg(2+) as cofactor.

The protein resides in the mitochondrion inner membrane. The protein operates within cofactor biosynthesis; ubiquinone biosynthesis. Its function is as follows. Assembly of polyisoprenoid side chains. The polyprenyl synthase of coenzyme Q biosynthesis catalyzes the formation from isopentenyl diphosphate of all trans-polyprenyl pyrophosphates generally ranging in length of between 6 and 10 isoprene units depending on the species. This chain is Hexaprenyl pyrophosphate synthase, mitochondrial (COQ1), found in Saccharomyces cerevisiae (strain ATCC 204508 / S288c) (Baker's yeast).